Consider the following 105-residue polypeptide: Probable tetrachloroethene reductive dehalogenase membrane anchor protein (105 aa).

A run of 3 helical transmembrane segments spans residues 3-23 (IYDVLIWMALGMTALLIQYGI), 35-55 (IPLQICGFLANFFFIFALAWG), and 66-86 (AIGMGFIFFGGTALIPAIITY).

This sequence belongs to the PceB family.

Its subcellular location is the cell membrane. May act as a membrane anchor for the tetrachloroethene reductive dehalogenase PceA. In Dehalobacter restrictus (strain DSM 9455 / PER-K23), this protein is Probable tetrachloroethene reductive dehalogenase membrane anchor protein.